The sequence spans 360 residues: Phospho-N-acetylmuramoyl-pentapeptide-transferase (360 aa).

The next 10 helical transmembrane spans lie at 18 to 38 (VFSYLTLRAILGILTALMMSL), 73 to 93 (TMGGLLILAAIFTSTLLWADL), 97 to 117 (YVWATLFVIGSLGVVGFVDDY), 135 to 155 (FWQSVIALVVACALFFTSTQA), 168 to 188 (VLPQLGLFYIVITYFALVGTS), 199 to 219 (GLAIVPTILVAAALAIIAYLT), 236 to 256 (ASELVVVCTAIVGAGLGFLWF), 263 to 283 (VFMGDVGSLALGGALGIIAVL), 288 to 308 (LLLIIMGGVFVMEALSVILQV), and 339 to 359 (IVRFWIISIVLVLAGLATLKI).

This sequence belongs to the glycosyltransferase 4 family. MraY subfamily. Mg(2+) is required as a cofactor.

It localises to the cell inner membrane. It catalyses the reaction UDP-N-acetyl-alpha-D-muramoyl-L-alanyl-gamma-D-glutamyl-meso-2,6-diaminopimeloyl-D-alanyl-D-alanine + di-trans,octa-cis-undecaprenyl phosphate = di-trans,octa-cis-undecaprenyl diphospho-N-acetyl-alpha-D-muramoyl-L-alanyl-D-glutamyl-meso-2,6-diaminopimeloyl-D-alanyl-D-alanine + UMP. Its pathway is cell wall biogenesis; peptidoglycan biosynthesis. Functionally, catalyzes the initial step of the lipid cycle reactions in the biosynthesis of the cell wall peptidoglycan: transfers peptidoglycan precursor phospho-MurNAc-pentapeptide from UDP-MurNAc-pentapeptide onto the lipid carrier undecaprenyl phosphate, yielding undecaprenyl-pyrophosphoryl-MurNAc-pentapeptide, known as lipid I. The chain is Phospho-N-acetylmuramoyl-pentapeptide-transferase from Pseudoalteromonas translucida (strain TAC 125).